The primary structure comprises 80 residues: MSGLGIMVLTLLLLVSMATSHQDGGGKQATQRDAINVRRRRSITRREVVTEECEEYCKEQNKTCCGLTNGRPRCVGVCFG.

An N-terminal signal peptide occupies residues 1–20 (MSGLGIMVLTLLLLVSMATS). The propeptide occupies 21–44 (HQDGGGKQATQRDAINVRRRRSIT). Cystine bridges form between Cys-53–Cys-65, Cys-57–Cys-74, and Cys-64–Cys-78. Position 79 is a phenylalanine amide (Phe-79).

It belongs to the conotoxin O3 superfamily. As to expression, expressed by the venom duct.

It is found in the secreted. This chain is Conotoxin VnMSGL-0123, found in Conus ventricosus (Mediterranean cone).